The following is a 133-amino-acid chain: Profilin Sal k 4.0101 (133 aa).

Cys-95 and Cys-117 are oxidised to a cystine.

Belongs to the profilin family. As to quaternary structure, occurs in many kinds of cells as a complex with monomeric actin in a 1:1 ratio. Expressed in pollen.

It is found in the cytoplasm. It localises to the cytoskeleton. Its function is as follows. Binds to actin and affects the structure of the cytoskeleton. At high concentrations, profilin prevents the polymerization of actin, whereas it enhances it at low concentrations. The sequence is that of Profilin Sal k 4.0101 from Kali turgidum (Prickly saltwort).